Here is a 440-residue protein sequence, read N- to C-terminus: Chromosomal replication initiator protein DnaA (440 aa).

The tract at residues 1–74 is domain I, interacts with DnaA modulators; the sequence is MNPSQILENL…VQSGNKAIIN (74 aa). The tract at residues 74–99 is domain II; that stretch reads NIQAQSTKQSNKSTKIDIAHIQAQST. The domain III, AAA+ region stretch occupies residues 100 to 316; the sequence is ILNPSFTFES…GIIISLNAYA (217 aa). The ATP site is built by Gly-146, Gly-148, Lys-149, and Thr-150. The interval 317 to 440 is domain IV, binds dsDNA; sequence TILGQEITLE…KNKILIKSQS (124 aa).

The protein belongs to the DnaA family. In terms of assembly, oligomerizes as a right-handed, spiral filament on DNA at oriC.

It localises to the cytoplasm. Its function is as follows. Plays an essential role in the initiation and regulation of chromosomal replication. ATP-DnaA binds to the origin of replication (oriC) to initiate formation of the DNA replication initiation complex once per cell cycle. Binds the DnaA box (a 9 base pair repeat at the origin) and separates the double-stranded (ds)DNA. Forms a right-handed helical filament on oriC DNA; dsDNA binds to the exterior of the filament while single-stranded (ss)DNA is stabiized in the filament's interior. The ATP-DnaA-oriC complex binds and stabilizes one strand of the AT-rich DNA unwinding element (DUE), permitting loading of DNA polymerase. After initiation quickly degrades to an ADP-DnaA complex that is not apt for DNA replication. Binds acidic phospholipids. This chain is Chromosomal replication initiator protein DnaA, found in Campylobacter jejuni subsp. doylei (strain ATCC BAA-1458 / RM4099 / 269.97).